The primary structure comprises 275 residues: Ribosomal RNA small subunit methyltransferase A (275 aa).

The S-adenosyl-L-methionine site is built by Asn21, Leu23, Gly48, Glu69, Asp94, and Asn115.

The protein belongs to the class I-like SAM-binding methyltransferase superfamily. rRNA adenine N(6)-methyltransferase family. RsmA subfamily.

It localises to the cytoplasm. It catalyses the reaction adenosine(1518)/adenosine(1519) in 16S rRNA + 4 S-adenosyl-L-methionine = N(6)-dimethyladenosine(1518)/N(6)-dimethyladenosine(1519) in 16S rRNA + 4 S-adenosyl-L-homocysteine + 4 H(+). Its function is as follows. Specifically dimethylates two adjacent adenosines (A1518 and A1519) in the loop of a conserved hairpin near the 3'-end of 16S rRNA in the 30S particle. May play a critical role in biogenesis of 30S subunits. This is Ribosomal RNA small subunit methyltransferase A from Clostridium botulinum (strain Okra / Type B1).